We begin with the raw amino-acid sequence, 467 residues long: Ribulose bisphosphate carboxylase large chain (467 aa).

At Lys5 the chain carries N6,N6,N6-trimethyllysine. Residues Asn114 and Thr164 each contribute to the substrate site. The active-site Proton acceptor is the Lys166. Lys168 contributes to the substrate binding site. Mg(2+)-binding residues include Lys192, Asp194, and Glu195. Residue Lys192 is modified to N6-carboxylysine. The Proton acceptor role is filled by His285. Substrate is bound by residues Arg286, His318, and Ser370.

Belongs to the RuBisCO large chain family. Type I subfamily. Heterohexadecamer of 8 large chains and 8 small chains; disulfide-linked. The disulfide link is formed within the large subunit homodimers. Mg(2+) is required as a cofactor. Post-translationally, the disulfide bond which can form in the large chain dimeric partners within the hexadecamer appears to be associated with oxidative stress and protein turnover.

The protein resides in the plastid. It is found in the chloroplast. It catalyses the reaction 2 (2R)-3-phosphoglycerate + 2 H(+) = D-ribulose 1,5-bisphosphate + CO2 + H2O. The enzyme catalyses D-ribulose 1,5-bisphosphate + O2 = 2-phosphoglycolate + (2R)-3-phosphoglycerate + 2 H(+). Its function is as follows. RuBisCO catalyzes two reactions: the carboxylation of D-ribulose 1,5-bisphosphate, the primary event in carbon dioxide fixation, as well as the oxidative fragmentation of the pentose substrate in the photorespiration process. Both reactions occur simultaneously and in competition at the same active site. This is Ribulose bisphosphate carboxylase large chain from Jasminum simplicifolium subsp. suavissimum (Native jasmine).